The chain runs to 531 residues: Acyl-CoA ligase azaF (531 aa).

188–199 lines the AMP pocket; that stretch reads RLFSSGTTGLPK. The tract at residues 449–525 is AMP-binding; it reads EVEGVLRNHP…DAIPRNASGK (77 aa).

Belongs to the ATP-dependent AMP-binding enzyme family.

Its pathway is secondary metabolite biosynthesis. Functionally, acyl-CoA ligase; part of the gene cluster that mediates the biosynthesis of azaphilones, a class of fungal metabolites characterized by a highly oxygenated pyrano-quinone bicyclic core and exhibiting a broad range of bioactivities. In the first step, the non-reducing polyketide synthase azaA forms the hexaketide precursor from successive condensations of five malonyl-CoA units, presumably with a simple acetyl-CoA starter unit. The reactive polyketide chain then undergoes a PT-mediated C2-C7 cyclization to afford the aromatic ring and is eventually released as an aldehyde through the R-domain. The putative ketoreductase azaE is proposed to catalyze the reduction of the terminal ketone resulting in the early culture product FK17-P2a. The monooxygenase azaH was demonstrated to be the only enzyme required to convert FK17-P2a to azanigerone E. AzaH first hydroxylates the benzaldehyde intermediate FK17-P2a at C4, which triggers the formation of the pyran-ring to afford azanigerone E. In parallel, the 2,4-dimethylhexanoyl chain is synthesized by the HR-PKS azaB and is proposed to be transferred to the C4-hydroxyl of azanigerone E by the acyltransferase azaD directly from the ACP domain of azaB. Alternatively, the 2,4-dimethyl-hexanoyl chain may be offloaded from the HR-PKS as a carboxylic acid and converted to an acyl-CoA by azaF. The resulting acyl-CoA molecule could then be taken up as a substrate by AzaD to form azanigerone B. To yield the carboxylic acid substituent in azanigerone A, the hydroxypropyl side chain of azanigerone B would need to undergo a C-C oxidative cleavage catalyzed by cytochrome P450 AzaI. AzaI is proposed to act on a vicinal diol that leads to a C-C bond scission either through an alkoxyradical intermediate or a peroxy complex. In the biosynthesis of azanigerone A, azanigerone B first undergoes hydroxylation at C10, possibly catalyzed by one of the two FAD-dependent monooxygenases encoded in the cluster, azaG or azaL, resulting in the vicinal diol azanigerone C. Oxidative cleavage of azanigerone C by azaI would yield the corresponding aldehyde derivative of azanigerone A. Finally, the dehydrogenase azaJ is proposed to convert the aldehyde functional group into the carboxylic acid, completing the conversion from azanigerone B to azanigerone A. Alternatively, the oxidation of aldehyde to carboxylic acid may be catalyzed by the same P450 enzyme azaI via consecutive oxidation or by endogenous alcohol dehydrogenase. The polypeptide is Acyl-CoA ligase azaF (Aspergillus niger (strain ATCC 1015 / CBS 113.46 / FGSC A1144 / LSHB Ac4 / NCTC 3858a / NRRL 328 / USDA 3528.7)).